The sequence spans 467 residues: Nuclear distribution protein nudF 1 (467 aa).

Residues 9–41 enclose the LisH domain; that stretch reads QAEELHKSIIAYLASVNLSESATTLRAELGDAV. The stretch at 60 to 87 forms a coiled coil; it reads TSVVRLQKKIMDLESRCAALQSELDSAT. WD repeat units follow at residues 113–154, 156–196, 200–247, 250–289, 292–352, 354–393, 398–428, and 429–466; these read SHRS…RTVK, HTKA…KNIR, GHDH…CVKT, GHVD…TRST, GHEH…IKTL, GHDN…KCVR, THEH…NGTP, and AATT…RVFA. The span at 417-437 shows a compositional bias: low complexity; it reads GANGDAGANGTPAATTTSNGA. The disordered stretch occupies residues 417-441; it reads GANGDAGANGTPAATTTSNGARQDP.

It belongs to the WD repeat LIS1/nudF family. In terms of assembly, self-associates. Interacts with nudE and dynein.

The protein localises to the cytoplasm. It is found in the cytoskeleton. Its subcellular location is the spindle pole. Functionally, positively regulates the activity of the minus-end directed microtubule motor protein dynein. May enhance dynein-mediated microtubule sliding by targeting dynein to the microtubule plus end. Required for nuclear migration during vegetative growth as well as development. Required for retrograde early endosome (EE) transport from the hyphal tip. Required for localization of dynein to the mitotic spindle poles. Recruits additional proteins to the dynein complex at SPBs. This is Nuclear distribution protein nudF 1 from Aspergillus clavatus (strain ATCC 1007 / CBS 513.65 / DSM 816 / NCTC 3887 / NRRL 1 / QM 1276 / 107).